The sequence spans 358 residues: ATPase ASNA1 homolog (358 aa).

Residue 35–42 (KGGVGKTT) coordinates ATP. Aspartate 64 is a catalytic residue. Positions 235 and 262 each coordinate ATP.

It belongs to the arsA ATPase family. In terms of assembly, homodimer.

It is found in the cytoplasm. It localises to the endoplasmic reticulum. Functionally, ATPase required for the post-translational delivery of tail-anchored (TA) proteins to the endoplasmic reticulum. Recognizes and selectively binds the transmembrane domain of TA proteins in the cytosol. This complex then targets to the endoplasmic reticulum by membrane-bound receptors, where the tail-anchored protein is released for insertion. This process is regulated by ATP binding and hydrolysis. ATP binding drives the homodimer towards the closed dimer state, facilitating recognition of newly synthesized TA membrane proteins. ATP hydrolysis is required for insertion. Subsequently, the homodimer reverts towards the open dimer state, lowering its affinity for the membrane-bound receptor, and returning it to the cytosol to initiate a new round of targeting. This Babesia bovis protein is ATPase ASNA1 homolog.